Consider the following 282-residue polypeptide: Putative 4-diphosphocytidyl-2-C-methyl-D-erythritol kinase (282 aa).

Lys-9 is an active-site residue. 93–103 is an ATP binding site; the sequence is PVSAGLAGGSA. Asp-135 is a catalytic residue.

The protein belongs to the GHMP kinase family. IspE subfamily.

The catalysed reaction is 4-CDP-2-C-methyl-D-erythritol + ATP = 4-CDP-2-C-methyl-D-erythritol 2-phosphate + ADP + H(+). Its function is as follows. Catalyzes the phosphorylation of the position 2 hydroxy group of 4-diphosphocytidyl-2C-methyl-D-erythritol. In Staphylococcus haemolyticus (strain JCSC1435), this protein is Putative 4-diphosphocytidyl-2-C-methyl-D-erythritol kinase.